Consider the following 108-residue polypeptide: Insulin-like peptide 17 (108 aa).

Residues 1-19 (MFSTRGVLLLLSLMAAVAA) form the signal peptide.

The protein belongs to the insulin family. As to expression, expressed in head neurons and the uterus.

It localises to the secreted. Functionally, involved in the regulation of the larval diapause. The protein is Insulin-like peptide 17 of Caenorhabditis elegans.